Consider the following 299-residue polypeptide: Taste receptor type 2 member 4 (299 aa).

The Extracellular portion of the chain corresponds to M1–A9. Residues I10–V30 traverse the membrane as a helical segment. Residues N31–R46 lie on the Cytoplasmic side of the membrane. A helical transmembrane segment spans residues I47–I67. Residues Y68–S81 lie on the Extracellular side of the membrane. A helical transmembrane segment spans residues A82–L102. Over N103–R131 the chain is Cytoplasmic. The helical transmembrane segment at L132–Q152 threads the bilayer. Residues A153–E172 are Extracellular-facing. Residues N164, N165, and N169 are each glycosylated (N-linked (GlcNAc...) asparagine). A helical membrane pass occupies residues G173 to V193. At T194 to K230 the chain is on the cytoplasmic side. A helical membrane pass occupies residues L231 to L251. At P252 to K262 the chain is on the extracellular side. The chain crosses the membrane as a helical span at residues S263–T283. Residues H284–K299 lie on the Cytoplasmic side of the membrane.

It belongs to the G-protein coupled receptor T2R family. In terms of tissue distribution, expressed in subsets of taste receptor cells of the tongue and palate epithelium and exclusively in gustducin-positive cells. Expressed on airway ciliated epithelium.

The protein resides in the membrane. Its subcellular location is the cell projection. It localises to the cilium membrane. Its function is as follows. Gustducin-coupled receptor for denatonium and N(6)-propyl-2-thiouracil implicated in the perception of bitter compounds in the oral cavity and the gastrointestinal tract. Signals through PLCB2 and the calcium-regulated cation channel TRPM5. In airway epithelial cells, binding of denatonium increases the intracellular calcium ion concentration and stimulates ciliary beat frequency. This Homo sapiens (Human) protein is Taste receptor type 2 member 4 (TAS2R4).